The following is a 634-amino-acid chain: Probable potassium transport system protein Kup (634 aa).

12 helical membrane passes run 19–39 (AIGLMVGAVGVCYGDIGTSPL), 62–82 (VLSLIFWSLVWVVSIKYVIFV), 113–133 (FVVVAGLIGAALFYGDSMITP), 150–170 (GLEHWTVPLALIVLIGLFLIQ), 177–197 (IGILFGPVMVLWFGALAALGV), 225–245 (IGVAILGATVLALTGAEALYA), 259–279 (WFLLVLPALVLNYFGQGATIL), 291–311 (LLAPGWALLPMVALSTLATVI), 349–369 (IYIGGVNWALMVGVVLLVLGF), 379–399 (YGVAVTGTMLITTLLMGVVIW), 406–426 (LWLGVPFFCVMLAVDSLFFAA), and 431–451 (VIQGGAFPVIAGIVIFILMST).

The protein belongs to the HAK/KUP transporter (TC 2.A.72) family.

It localises to the cell inner membrane. The catalysed reaction is K(+)(in) + H(+)(in) = K(+)(out) + H(+)(out). Transport of potassium into the cell. Likely operates as a K(+):H(+) symporter. In Pseudomonas aeruginosa (strain UCBPP-PA14), this protein is Probable potassium transport system protein Kup.